An 82-amino-acid chain; its full sequence is MVLAVDLLNPSPASEARKHKLKTLVPAPRSFFMDVKCPGCFTITTVFSHAQTVVICQGCTTVLCQPTGGKARLTEGCSFRRK.

A C4-type zinc finger spans residues 37-59 (CPGCFTITTVFSHAQTVVICQGC).

The protein belongs to the eukaryotic ribosomal protein eS27 family. As to quaternary structure, component of the small ribosomal subunit (SSU). Mature N.crassa ribosomes consist of a small (40S) and a large (60S) subunit. The 40S small subunit contains 1 molecule of ribosomal RNA (18S rRNA) and at least 32 different proteins. The large 60S subunit contains 3 rRNA molecules (26S, 5.8S and 5S rRNA) and at least 42 different proteins. Requires Zn(2+) as cofactor.

The protein localises to the cytoplasm. Functionally, component of the ribosome, a large ribonucleoprotein complex responsible for the synthesis of proteins in the cell. The small ribosomal subunit (SSU) binds messenger RNAs (mRNAs) and translates the encoded message by selecting cognate aminoacyl-transfer RNA (tRNA) molecules. The large subunit (LSU) contains the ribosomal catalytic site termed the peptidyl transferase center (PTC), which catalyzes the formation of peptide bonds, thereby polymerizing the amino acids delivered by tRNAs into a polypeptide chain. The nascent polypeptides leave the ribosome through a tunnel in the LSU and interact with protein factors that function in enzymatic processing, targeting, and the membrane insertion of nascent chains at the exit of the ribosomal tunnel. The sequence is that of Small ribosomal subunit protein eS27 (crp-6) from Neurospora crassa (strain ATCC 24698 / 74-OR23-1A / CBS 708.71 / DSM 1257 / FGSC 987).